A 663-amino-acid chain; its full sequence is MGSMYRASKTLKSSRQALSILFNSLNSNRQNPTCIGLYQAYGFSSDSRQSSKEPTIDLTKFPSEKIRNFSIIAHIDHGKSTLADRLMELTGTIKKGHGQPQYLDKLQVERERGITVKAQTATMFYENKVEDQEASGYLLNLIDTPGHVDFSYEVSRSLSACQGALLVVDAAQGVQAQTVANFYLAFEANLTIVPVINKIDQPTADPERVKAQLKSMFDLDTEDVLLVSAKTGLGLEHVLPAVIERIPPPPGISESPLRMLLFDSFFNEYKGVICYVSVVDGMLSKGDKVSFAASGQSYEVLDVGIMHPELTSTGMLLTGQVGYIVTGMRTTKEARIGDTIYRTKTTVEPLPGFKPVRHMVFSGVYPADGSDFEALGHAMEKLTCNDASVSVAKETSTALGMGFRCGFLGLLHMDVFHQRLEQEYGTQVISTIPTVPYTFEYSDGSKLQVQNPAALPSNPKYRVTASWEPTVIATIILPSEYVGAVINLCSDRRGQQLEYTFIDAQRVFLKYQLPLREIVVDFYDELKSITSGYASFDYEDAEYQASDLVKLDILLNGQAVDALATIVHKQKAYRVGKELVEKLKNYIERQMFEVMIQAAIGSKIIARDTISAMRKNVLAKCYGGDITRKKKLLEKQKEGKKRMKRVGSVDIPHEAFQQILKVS.

The tr-type G domain occupies 64 to 250 (EKIRNFSIIA…AVIERIPPPP (187 aa)). GTP is bound by residues 73–80 (AHIDHGKS), 143–147 (DTPGH), and 197–200 (NKID).

This sequence belongs to the TRAFAC class translation factor GTPase superfamily. Classic translation factor GTPase family. LepA subfamily.

The protein resides in the mitochondrion inner membrane. The enzyme catalyses GTP + H2O = GDP + phosphate + H(+). In terms of biological role, promotes mitochondrial protein synthesis. May act as a fidelity factor of the translation reaction, by catalyzing a one-codon backward translocation of tRNAs on improperly translocated ribosomes. Binds to mitochondrial ribosomes in a GTP-dependent manner. This is Translation factor GUF1 homolog, mitochondrial from Arabidopsis thaliana (Mouse-ear cress).